A 223-amino-acid chain; its full sequence is Pleckstrin homology domain-containing family B member 1 (223 aa).

Positions 2-109 (ALVRGGWLWR…WKTALMEANS (108 aa)) constitute a PH domain.

As to quaternary structure, homodimer. Interacts (via PH domain) with MYO1C. Interacts (via PH domain) with MYO7A. Binds transducins. In terms of tissue distribution, highly expressed in photoreceptor cells, oligodendrocytes and throughout the myelinated parts of the central nervous system. Detected in brain, liver, kidney, spleen and trachea.

The protein resides in the membrane. The protein localises to the cytoplasm. This chain is Pleckstrin homology domain-containing family B member 1 (Plekhb1), found in Rattus norvegicus (Rat).